Here is a 699-residue protein sequence, read N- to C-terminus: Endogenous retrovirus group K member 19 Env polyprotein (699 aa).

The disordered stretch occupies residues 1–47 (MNPSEMQRKAPPRRRRHRNRAPLTHKMNKMVTSEEQMKLPSTKKAEP). The N-terminal stretch at 1–89 (MNPSEMQRKA…ALMIVSMVVS (89 aa)) is a signal peptide. Over residues 10 to 20 (APPRRRRHRNR) the composition is skewed to basic residues. Residues 90 to 632 (LPMPAGAAAA…NLNPVTWVKT (543 aa)) are Extracellular-facing. Residues asparagine 100, asparagine 128, asparagine 153, asparagine 274, asparagine 355, asparagine 372, and asparagine 461 are each glycosylated (N-linked (GlcNAc...) asparagine). The fusion peptide stretch occupies residues 466 to 486 (FIFTLIAVIMGLIAVTATAAV). N-linked (GlcNAc...) asparagine glycosylation is found at asparagine 507, asparagine 554, asparagine 566, and asparagine 585. Residues 633 to 653 (IGSTTIINLILILVCLFCLLL) traverse the membrane as a helical segment. The Cytoplasmic segment spans residues 654–699 (VCRCTQQLRRDSDHRERAMMTMAVLSKRKGGNVGKSKRDQIVTVSV).

Belongs to the beta type-B retroviral envelope protein family. HERV class-II K(HML-2) env subfamily. As to quaternary structure, the surface (SU) and transmembrane (TM) proteins form a heterodimer. SU and TM are attached by noncovalent interactions or by a labile interchain disulfide bond. Specific enzymatic cleavages in vivo yield the mature SU and TM proteins.

It localises to the cell membrane. Its subcellular location is the virion. Its function is as follows. Retroviral envelope proteins mediate receptor recognition and membrane fusion during early infection. Endogenous envelope proteins may have kept, lost or modified their original function during evolution. This endogenous envelope protein has lost its original fusogenic properties. In terms of biological role, SU mediates receptor recognition. TM anchors the envelope heterodimer to the viral membrane through one transmembrane domain. The other hydrophobic domain, called fusion peptide, mediates fusion of the viral membrane with the target cell membrane. The polypeptide is Endogenous retrovirus group K member 19 Env polyprotein (ERVK-19) (Homo sapiens (Human)).